We begin with the raw amino-acid sequence, 401 residues long: Enolase (401 aa).

Position 154 (glutamine 154) interacts with (2R)-2-phosphoglycerate. The active-site Proton donor is glutamate 196. Mg(2+) is bound by residues aspartate 232, glutamate 275, and aspartate 302. Lysine 327, arginine 356, serine 357, and lysine 378 together coordinate (2R)-2-phosphoglycerate. Residue lysine 327 is the Proton acceptor of the active site.

It belongs to the enolase family. The cofactor is Mg(2+).

It is found in the cytoplasm. The protein localises to the secreted. The protein resides in the cell surface. It catalyses the reaction (2R)-2-phosphoglycerate = phosphoenolpyruvate + H2O. Its pathway is carbohydrate degradation; glycolysis; pyruvate from D-glyceraldehyde 3-phosphate: step 4/5. In terms of biological role, catalyzes the reversible conversion of 2-phosphoglycerate (2-PG) into phosphoenolpyruvate (PEP). It is essential for the degradation of carbohydrates via glycolysis. The protein is Enolase of Haloquadratum walsbyi (strain DSM 16790 / HBSQ001).